The following is a 316-amino-acid chain: UPF0613 protein PB24D3.06c (316 aa).

Belongs to the UPF0613 family.

The protein resides in the cytoplasm. Its subcellular location is the nucleus. This Schizosaccharomyces pombe (strain 972 / ATCC 24843) (Fission yeast) protein is UPF0613 protein PB24D3.06c.